Reading from the N-terminus, the 222-residue chain is UPF0758 protein YicR (222 aa).

One can recognise an MPN domain in the interval 100-222 (PLLSPEMTRE…NVSFAERGWI (123 aa)). Positions 171, 173, and 184 each coordinate Zn(2+). A JAMM motif motif is present at residues 171-184 (HNHPSGCAEPSKAD).

The protein belongs to the UPF0758 family. YicR subfamily.

This is UPF0758 protein YicR from Shigella boydii serotype 18 (strain CDC 3083-94 / BS512).